The following is a 254-amino-acid chain: Precorrin-3B C(17)-methyltransferase (254 aa).

The protein belongs to the precorrin methyltransferase family.

It carries out the reaction precorrin-3B + S-adenosyl-L-methionine = precorrin-4 + S-adenosyl-L-homocysteine + 3 H(+). Its pathway is cofactor biosynthesis; adenosylcobalamin biosynthesis; cob(II)yrinate a,c-diamide from precorrin-2 (aerobic route): step 3/10. Functionally, methyltransferase that catalyzes the methylation of C-17 in precorrin-3B to form precorrin-4. This is Precorrin-3B C(17)-methyltransferase (cobJ) from Sinorhizobium sp.